The following is a 122-amino-acid chain: UPF0102 protein BQ09720 (122 aa).

This sequence belongs to the UPF0102 family.

The protein is UPF0102 protein BQ09720 of Bartonella quintana (strain Toulouse) (Rochalimaea quintana).